The sequence spans 548 residues: LDL receptor repeat-containing protein egg-2 (548 aa).

At Met-1–Ala-49 the chain is on the cytoplasmic side. A helical; Signal-anchor for type II membrane protein transmembrane segment spans residues Ile-50–Phe-70. Over Leu-71 to Pro-548 the chain is Extracellular. A glycan (N-linked (GlcNAc...) asparagine) is linked at Asn-119. LDL-receptor class A domains follow at residues Thr-122–Lys-160, Glu-161–Arg-213, Lys-215–Asn-252, Lys-253–Asp-288, Thr-291–Pro-328, Lys-370–Thr-412, Glu-416–Asp-454, and Lys-455–Ser-492. 23 cysteine pairs are disulfide-bonded: Cys-130/Cys-150, Cys-144/Cys-159, Cys-162/Cys-190, Cys-168/Cys-203, Cys-197/Cys-212, Cys-216/Cys-229, Cys-223/Cys-242, Cys-236/Cys-251, Cys-254/Cys-265, Cys-261/Cys-278, Cys-272/Cys-287, Cys-292/Cys-305, Cys-300/Cys-318, Cys-312/Cys-327, Cys-371/Cys-389, Cys-379/Cys-402, Cys-396/Cys-411, Cys-417/Cys-431, Cys-427/Cys-444, Cys-438/Cys-453, Cys-456/Cys-469, Cys-463/Cys-482, and Cys-476/Cys-491. Asn-244 carries N-linked (GlcNAc...) asparagine glycosylation. A glycan (N-linked (GlcNAc...) asparagine) is linked at Asn-527.

It is found in the cell membrane. It localises to the endosome membrane. Functionally, probable receptor which is required for the oocyte-to-zygote transition although its exact function is controversial. Redundantly with egg-1, seems to be required for fertilization probably by promoting the interaction or fusion between sperm and oocyte. Conversely, shown to be dispensable for fertilization but required together with egg-1 for the formation of a continuous and cohesive eggshell chitin layer by maintaining a homogenous distribution of chitin synthase chs-1 at the unfertilized oocyte cell membrane. Appears to recruit or maintain together to the unfertilized oocyte cortex several proteins including chs-1, kinase mbk-2 and pseudophosphatase egg-3, and possibly egg-4 and egg-5. This chain is LDL receptor repeat-containing protein egg-2, found in Caenorhabditis elegans.